The sequence spans 166 residues: MSSAIETKKVVVEEITSKLKESKSTIIVDYRGLNVAEVTELRKQLREANVEFKVYKNTMTRRAVEQAELDGLNDFLTGPNAIAFSTEDVVAPAKVLNEFAKKHEALEIKAGVIEGKVSTVEEVKALAELPSREGLLSMLLSVLQAPVRNLALATKAVAEQKEEQGA.

It belongs to the universal ribosomal protein uL10 family. As to quaternary structure, part of the ribosomal stalk of the 50S ribosomal subunit. The N-terminus interacts with L11 and the large rRNA to form the base of the stalk. The C-terminus forms an elongated spine to which L12 dimers bind in a sequential fashion forming a multimeric L10(L12)X complex.

Forms part of the ribosomal stalk, playing a central role in the interaction of the ribosome with GTP-bound translation factors. The chain is Large ribosomal subunit protein uL10 from Bacillus licheniformis (strain ATCC 14580 / DSM 13 / JCM 2505 / CCUG 7422 / NBRC 12200 / NCIMB 9375 / NCTC 10341 / NRRL NRS-1264 / Gibson 46).